Reading from the N-terminus, the 153-residue chain is Endoribonuclease YbeY (153 aa).

Residues His-116, His-120, and His-126 each coordinate Zn(2+).

Belongs to the endoribonuclease YbeY family. Zn(2+) is required as a cofactor.

The protein localises to the cytoplasm. In terms of biological role, single strand-specific metallo-endoribonuclease involved in late-stage 70S ribosome quality control and in maturation of the 3' terminus of the 16S rRNA. The sequence is that of Endoribonuclease YbeY from Leifsonia xyli subsp. xyli (strain CTCB07).